We begin with the raw amino-acid sequence, 407 residues long: Elongation factor Tu, chloroplastic (407 aa).

The 203-residue stretch at 10-212 (KPHVNIGTIG…SVDNYIPAPE (203 aa)) folds into the tr-type G domain. A G1 region spans residues 19–26 (GHVDHGKT). Position 19 to 26 (19 to 26 (GHVDHGKT)) interacts with GTP. Threonine 26 serves as a coordination point for Mg(2+). The tract at residues 59–63 (GITIN) is G2. A G3 region spans residues 80–83 (DCPG). GTP-binding positions include 80–84 (DCPGH) and 135–138 (NKAD). The tract at residues 135–138 (NKAD) is G4. The segment at 173–175 (SAL) is G5.

It belongs to the TRAFAC class translation factor GTPase superfamily. Classic translation factor GTPase family. EF-Tu/EF-1A subfamily.

It localises to the plastid. It is found in the chloroplast. The enzyme catalyses GTP + H2O = GDP + phosphate + H(+). GTP hydrolase that promotes the GTP-dependent binding of aminoacyl-tRNA to the A-site of ribosomes during protein biosynthesis. This Emiliania huxleyi (Coccolithophore) protein is Elongation factor Tu, chloroplastic (tufA).